A 261-amino-acid chain; its full sequence is Homeobox protein ceh-33 (261 aa).

Residues 133–192 (GEETSYCFRDKSRVLLRDWYCRNSYPSPREKRELAEKTHLTVTQVSNWFKNRRQRDRAGV) constitute a DNA-binding region (homeobox).

It belongs to the SIX/Sine oculis homeobox family.

The protein resides in the nucleus. This Caenorhabditis elegans protein is Homeobox protein ceh-33 (ceh-33).